Consider the following 270-residue polypeptide: Formamidopyrimidine-DNA glycosylase (270 aa).

The active-site Schiff-base intermediate with DNA is the proline 2. Glutamate 3 functions as the Proton donor in the catalytic mechanism. The active-site Proton donor; for beta-elimination activity is the lysine 57. 3 residues coordinate DNA: histidine 90, arginine 109, and lysine 150. The segment at 235 to 269 (QIYGKKGCPCPKCGQKIESFTVGQRNSYVCLHCQK) adopts an FPG-type zinc-finger fold. Residue arginine 259 is the Proton donor; for delta-elimination activity of the active site.

It belongs to the FPG family. As to quaternary structure, monomer. It depends on Zn(2+) as a cofactor.

It carries out the reaction Hydrolysis of DNA containing ring-opened 7-methylguanine residues, releasing 2,6-diamino-4-hydroxy-5-(N-methyl)formamidopyrimidine.. The enzyme catalyses 2'-deoxyribonucleotide-(2'-deoxyribose 5'-phosphate)-2'-deoxyribonucleotide-DNA = a 3'-end 2'-deoxyribonucleotide-(2,3-dehydro-2,3-deoxyribose 5'-phosphate)-DNA + a 5'-end 5'-phospho-2'-deoxyribonucleoside-DNA + H(+). In terms of biological role, involved in base excision repair of DNA damaged by oxidation or by mutagenic agents. Acts as a DNA glycosylase that recognizes and removes damaged bases. Has a preference for oxidized purines, such as 7,8-dihydro-8-oxoguanine (8-oxoG). Has AP (apurinic/apyrimidinic) lyase activity and introduces nicks in the DNA strand. Cleaves the DNA backbone by beta-delta elimination to generate a single-strand break at the site of the removed base with both 3'- and 5'-phosphates. The polypeptide is Formamidopyrimidine-DNA glycosylase (Actinobacillus succinogenes (strain ATCC 55618 / DSM 22257 / CCUG 43843 / 130Z)).